A 335-amino-acid chain; its full sequence is Cathepsin B (335 aa).

Residues 1-17 (MWRLLATLSCLVLLTSA) form the signal peptide. The propeptide at 18-79 (RESLHFQPLS…QRAAFAADMI (62 aa)) is activation peptide. 6 cysteine pairs are disulfide-bonded: cysteine 93/cysteine 122, cysteine 105/cysteine 150, cysteine 141/cysteine 207, cysteine 142/cysteine 146, cysteine 179/cysteine 211, and cysteine 187/cysteine 198. The active site involves cysteine 108. An N-linked (GlcNAc...) asparagine glycan is attached at asparagine 192. Lysine 220 is modified (N6-acetyllysine). A disulfide bridge connects residues cysteine 227 and cysteine 331. Catalysis depends on residues histidine 278 and asparagine 298. The propeptide occupies 333 to 335 (PHF).

The protein belongs to the peptidase C1 family. Dimer of a heavy chain and a light chain cross-linked by a disulfide bond. Interacts with SRPX2. Directly interacts with SHKBP1. Expressed in heart (at protein level).

The protein resides in the lysosome. Its subcellular location is the melanosome. It localises to the secreted. The protein localises to the extracellular space. It is found in the apical cell membrane. The enzyme catalyses Hydrolysis of proteins with broad specificity for peptide bonds. Preferentially cleaves -Arg-Arg-|-Xaa bonds in small molecule substrates (thus differing from cathepsin L). In addition to being an endopeptidase, shows peptidyl-dipeptidase activity, liberating C-terminal dipeptides.. Functionally, thiol protease which is believed to participate in intracellular degradation and turnover of proteins. Cleaves matrix extracellular phosphoglycoprotein MEPE. Involved in the solubilization of cross-linked TG/thyroglobulin in the thyroid follicle lumen. Has also been implicated in tumor invasion and metastasis. The polypeptide is Cathepsin B (CTSB) (Sus scrofa (Pig)).